We begin with the raw amino-acid sequence, 1641 residues long: MPENGRLRRTSARLTQNGTSTSSSTIYQNGKRTSQHAQETSTASNKKRKVSTQSKEDKLSDIIVDFNLAVNELYQLKEYKSIISWDPIENSSANDRGIKAEFEEFVKNNDYRLVWDKEIENNSNIDSLPLRFQKKKLAEQNKLLDDKFSIRQNVLASSKMLEESLVNKTRDEVKIESTFKAIQSQEKAGSKLKTPSQTSNAKTNIRKSGSTTPKRGNENGSRKQALEDQDEIIELSDDSSVVEIESDLSDAETHYRIKCIKKTVPPPLVTHPSHIPQWRPENLEDGNRSTGRLIQLKDSSSSSKIINFDPTPLEIIQLKDEVIAAPKLTEKLQNFLNNDFKTPIIDESNVPDYNFTRDEYNTIMSQQEKLLRKLYHKVNIENSLELNGDKIERRKVILPQSNIKLTDPFRNTFSVKPKLHGAANNATHQDYLLAQGMAFSKVHQQMRKQHHLRTRKIAAMIDQHFKKKKGEKERLAKEREQNLKKMSRLTMQAVKKRWNQAQKVYQIIQNEKEEELKKIKGRQHLSEMLEHSTQLLEAQLTSSREPTVEAESDDNSTTFDDNTNDSDNFSSSEEEENEEDNTQQQINGNKKYDVNGKSNDENDMSLSVEELRKKYADLETSVEPLSSNVTSDKERESETSSEDAESSDDDDTDVTRGLASLYQNDEVADFATTTFEYSAEEKKLIEDLNQESDSRMNSLLDSDSVSSISDSESSEESSSDTEMDQSNVSEPPRSSETGSNTGLASLFTNGTIVSDEEDDASISSNFENESDESMNSSDRELEVNGNGKIDKIASTDEDDSNVEIVNGSKVKDVPIPSLLRGTLRPYQKQGLNWLASLYNNNTNGILADEMGLGKTIQTISLLAYLACEHHKWGPHLIIVPTSVMLNWEMEFKKFAPGFKVLTYYGSPQQRAQKRKGWNKPDAFHVCITSYQLVVQDQQSFKRRRWTYMILDEAHNIKNFRSTRWRALLNFNTENRLLLTGTPLQNNLMELWSLLYFLMPSSKVNQAMPEGFANLDDFQQWFGKPVDRILEQTSAGNSDLIDENERTTQKMDEETRNTVARLHQVLRPYLLRRLKKDVEKQMPGKYEHIVYCRLSKRQRFLYDDFMSRAKTKETLASGNFLSIINCLMQLRKVCNHPDLFEVRPIVTSFAMPRSIPSYYQSTNELVKRQFNKDEKVSFQALNLDVTGCENMNYFVCQSTGKLMTTEPFQDQINKLKILLVEFENSDPINYVSYYQRLRREEQAEIKEKLEHVVYLNNLRCGRKPIYGESLLRLLTVNAHDFSDEPYNKYCLTLSGRVDKMNDTIEKYSIITPAAVALDMKDQLIPISTKQRILHEVAENKIDNPFHKAQVKLSIAFPDKTLLQYDCGKLQKLATLLQELTSQGHRALIFTQMTKVLDILEQFLNIHGYRYMRLDGATKIEDRQLLTEKFNRDPKIPVFILSTRSGGLGINLTGADTVIFYDSDWNPAMDKQCQDRCHRIGQVRDVHIYRFVSEYTIESNIIKKANQKRQLDNVVIQEGEFTTDYFGKFSVRDLVSDSNIGKEITDRTIDFSGDAKMGNVLAQAEDEEDRVAAGAALKEVAIDDDDFKEETRSATTGATPAPTETNALSTTDGDAAFIDVDYEDGIGHIDEYMLRFISDGYYL.

2 disordered regions span residues 1–54 and 184–230; these read MPEN…STQS and SQEK…EDQD. Composition is skewed to polar residues over residues 12 to 44 and 184 to 214; these read ARLT…STAS and SQEK…TTPK. A compositionally biased stretch (basic and acidic residues) spans 215 to 226; the sequence is RGNENGSRKQAL. The HSA domain occupies 416 to 488; it reads KPKLHGAANN…REQNLKKMSR (73 aa). Positions 461–521 form a coiled coil; the sequence is IDQHFKKKKG…KEEELKKIKG (61 aa). Disordered stretches follow at residues 537-669 and 686-782; these read EAQL…EVAD and EDLN…RELE. Low complexity predominate over residues 555-571; that stretch reads NSTTFDDNTNDSDNFSS. A compositionally biased stretch (acidic residues) spans 572–581; the sequence is SEEEENEEDN. Positions 590–600 are enriched in basic and acidic residues; that stretch reads KKYDVNGKSND. Over residues 639 to 652 the composition is skewed to acidic residues; sequence TSSEDAESSDDDDT. Residues 701–711 are compositionally biased toward low complexity; it reads DSDSVSSISDS. A compositionally biased stretch (acidic residues) spans 712 to 723; the sequence is ESSEESSSDTEM. Residues 727 to 752 show a composition bias toward polar residues; that stretch reads NVSEPPRSSETGSNTGLASLFTNGTI. The 166-residue stretch at 835–1000 folds into the Helicase ATP-binding domain; that stretch reads ASLYNNNTNG…WSLLYFLMPS (166 aa). An ATP-binding site is contributed by 848 to 855; that stretch reads DEMGLGKT. The short motif at 951–954 is the DEAH box element; sequence DEAH. Residues 1367 to 1520 enclose the Helicase C-terminal domain; it reads KLQKLATLLQ…NVVIQEGEFT (154 aa). Residues 1586 to 1607 form a disordered region; it reads KEETRSATTGATPAPTETNALS. Residues 1591–1605 are compositionally biased toward low complexity; sequence SATTGATPAPTETNA.

It belongs to the SNF2/RAD54 helicase family. SWR1 subfamily. In terms of assembly, component of the SWR1 chromatin-remodeling complex.

It is found in the nucleus. The catalysed reaction is ATP + H2O = ADP + phosphate + H(+). Functionally, catalytic component of the SWR1 complex which mediates the ATP-dependent exchange of histone H2A for the H2A variant HZT1 leading to transcriptional regulation of selected genes by chromatin remodeling. This Candida albicans (strain SC5314 / ATCC MYA-2876) (Yeast) protein is Helicase SWR1 (SWR1).